The following is a 125-amino-acid chain: Somatostatin-2 (125 aa).

An N-terminal signal peptide occupies residues 1–24 (MQCIRCPAILALLALVLCGPSVSS). Gln25 carries the post-translational modification Pyrrolidone carboxylic acid. Residues 25-97 (QLDREQSDNQ…ATGGRMNLER (73 aa)) constitute a propeptide that is removed on maturation. The disordered stretch occupies residues 82-107 (AEDASMATGGRMNLERSVDSTNNLPP). The cysteines at positions 114 and 125 are disulfide-linked. Lys120 is modified (5-hydroxylysine).

It belongs to the somatostatin family.

The protein resides in the secreted. Functionally, somatostatin inhibits the release of somatotropin. The sequence is that of Somatostatin-2 (sst2) from Lophius americanus (American angler).